Consider the following 574-residue polypeptide: Arginine--tRNA ligase (574 aa).

Positions 126–136 match the 'HIGH' region motif; sequence PNIAKRMHVGH.

It belongs to the class-I aminoacyl-tRNA synthetase family. Monomer.

Its subcellular location is the cytoplasm. It catalyses the reaction tRNA(Arg) + L-arginine + ATP = L-arginyl-tRNA(Arg) + AMP + diphosphate. This is Arginine--tRNA ligase from Chloroflexus aurantiacus (strain ATCC 29366 / DSM 635 / J-10-fl).